Reading from the N-terminus, the 598-residue chain is UvrABC system protein C (598 aa).

The region spanning 13–92 (SSPGVYLMKD…IKKYQPRYNV (80 aa)) is the GIY-YIG domain. Residues 206–241 (RSTISNLEKAIEKASQEQKFEHAAALYRTLTLIRQT) enclose the UVR domain.

Belongs to the UvrC family. Interacts with UvrB in an incision complex.

The protein localises to the cytoplasm. In terms of biological role, the UvrABC repair system catalyzes the recognition and processing of DNA lesions. UvrC both incises the 5' and 3' sides of the lesion. The N-terminal half is responsible for the 3' incision and the C-terminal half is responsible for the 5' incision. This chain is UvrABC system protein C, found in Chlamydia trachomatis serovar A (strain ATCC VR-571B / DSM 19440 / HAR-13).